We begin with the raw amino-acid sequence, 251 residues long: ATP synthase subunit a (251 aa).

The next 7 helical transmembrane spans lie at 28-48, 63-80, 86-106, 115-135, 154-176, 195-215, and 219-239; these read FTQS…IIAL, LVEI…EQIG, FFPF…LGLF, HVAV…AVAL, ALAP…SLSI, FMFL…LLPM, and VTLV…FAIL.

Belongs to the ATPase A chain family. In terms of assembly, F-type ATPases have 2 components, CF(1) - the catalytic core - and CF(0) - the membrane proton channel. CF(1) has five subunits: alpha(3), beta(3), gamma(1), delta(1), epsilon(1). CF(0) has three main subunits: a(1), b(2) and c(9-12). The alpha and beta chains form an alternating ring which encloses part of the gamma chain. CF(1) is attached to CF(0) by a central stalk formed by the gamma and epsilon chains, while a peripheral stalk is formed by the delta and b chains.

It localises to the cell inner membrane. Its function is as follows. Key component of the proton channel; it plays a direct role in the translocation of protons across the membrane. This Granulibacter bethesdensis (strain ATCC BAA-1260 / CGDNIH1) protein is ATP synthase subunit a.